A 537-amino-acid chain; its full sequence is MFS-type transporter qa-x (537 aa).

The Cytoplasmic segment spans residues 1-26; sequence MTLLALKEDRPTPKAVYNWRVYTCAA. The chain crosses the membrane as a helical span at residues 27 to 47; that stretch reads IASFASCMIGYDSAFIGTTLA. Residues 48–74 are Extracellular-facing; the sequence is LPSFTKEFDFASYTPGALALLQSNIVS. The helical transmembrane segment at 75–95 threads the bilayer; that stretch reads VYQAGAFFGCLFAYATSYFLG. Residues 96-98 lie on the Cytoplasmic side of the membrane; the sequence is RRK. Residues 99 to 119 form a helical membrane-spanning segment; sequence SLIAFSVVFIIGAAIMLAADG. The Extracellular segment spans residues 120-131; that stretch reads QGRGIDPIIAGR. The chain crosses the membrane as a helical span at residues 132 to 152; that stretch reads VLAGIGVGGASNMVPIYISEL. At 153–160 the chain is on the cytoplasmic side; it reads APPAVRGR. Residues 161 to 181 traverse the membrane as a helical segment; it reads LVGIYELGWQIGGLVGFWINY. At 182 to 195 the chain is on the extracellular side; that stretch reads GVNTTMAPTRSQWL. Asn184 carries N-linked (GlcNAc...) asparagine glycosylation. The chain crosses the membrane as a helical span at residues 196 to 216; sequence IPFAVQLIPAGLLFLGSFWIP. Over 217-285 the chain is Cytoplasmic; sequence ESPRWLYANG…SLKQRKVQWR (69 aa). Residues 286–306 traverse the membrane as a helical segment; sequence FFLGGMLFFWQNGSGINAINY. Topologically, residues 307–327 are extracellular; the sequence is YSPTVFRSIGITGTDTGFLTT. A helical membrane pass occupies residues 328 to 349; it reads GIFGVVKMVLTIIWLLWLVDLV. Over 350 to 352 the chain is Cytoplasmic; sequence GRR. The chain crosses the membrane as a helical span at residues 353 to 373; that stretch reads RILFIGAAGGSLCMWFIGAYI. Topologically, residues 374 to 389 are extracellular; that stretch reads KIADPGSNKAEDAKLT. Residues 390–410 traverse the membrane as a helical segment; that stretch reads SGGIAAIFFFYLWTAFYTPSW. Residues 411 to 435 lie on the Cytoplasmic side of the membrane; sequence NGTPWVINSEMFDQNTRSLGQASAA. Residues 436–456 traverse the membrane as a helical segment; sequence ANNWFWNFIISRFTPQMFIKM. Residues 457–458 are Extracellular-facing; the sequence is EY. The helical transmembrane segment at 459–479 threads the bilayer; it reads GVYFFFASLMLLSIVFIYFFL. Topologically, residues 480–537 are cytoplasmic; that stretch reads PETKSIPLEAMDRLFEIKPVQNANKNLMAELNFDRNPEREESSSLDDKDRVTQTENAV. Basic and acidic residues predominate over residues 514–531; it reads RNPEREESSSLDDKDRVT. The segment at 514–537 is disordered; sequence RNPEREESSSLDDKDRVTQTENAV.

The protein belongs to the major facilitator superfamily. Sugar transporter (TC 2.A.1.1) family.

The protein resides in the membrane. MFS-type transporter; part of the qa gene cluster that mediates the catabolism of quinic acid (QA) and as such, allows the use of QA as a sole carbon source. Involved in the upatke of QA. The qa cluster encodes 3 inducible enymes (qa-2, qa-3 and qa-4) catalyzing the first three reactions in the catabolism of quinic acid to protocatechuic acid (also known as 3,4-Dihydroxybenzoic acid). In Neurospora crassa (strain ATCC 24698 / 74-OR23-1A / CBS 708.71 / DSM 1257 / FGSC 987), this protein is MFS-type transporter qa-x.